Reading from the N-terminus, the 339-residue chain is Protein H339R (339 aa).

It belongs to the asfivirus H339R family. Interacts with NACA (alpha chain of nascent polypeptide-associated complex).

The protein localises to the host cytoplasm. It localises to the host nucleus. Its subcellular location is the virion. This is Protein H339R from African swine fever virus (strain Badajoz 1971 Vero-adapted) (Ba71V).